The primary structure comprises 565 residues: NAD-dependent malic enzyme (565 aa).

Residue Tyr-104 is the Proton donor of the active site. Arg-157 contacts NAD(+). Residue Lys-175 is the Proton acceptor of the active site. Positions 246, 247, and 270 each coordinate a divalent metal cation. Positions 270 and 418 each coordinate NAD(+).

It belongs to the malic enzymes family. Homotetramer. Requires Mg(2+) as cofactor. Mn(2+) serves as cofactor.

The enzyme catalyses (S)-malate + NAD(+) = pyruvate + CO2 + NADH. The catalysed reaction is oxaloacetate + H(+) = pyruvate + CO2. In Escherichia coli O139:H28 (strain E24377A / ETEC), this protein is NAD-dependent malic enzyme.